The chain runs to 188 residues: Holliday junction branch migration complex subunit RuvA (188 aa).

The segment at Met1–Asp63 is domain I. A domain II region spans residues Ser64–Glu142. A region of interest (flexible linker) is located at residue Glu142. A domain III region spans residues Glu142–Ile188.

The protein belongs to the RuvA family. Homotetramer. Forms an RuvA(8)-RuvB(12)-Holliday junction (HJ) complex. HJ DNA is sandwiched between 2 RuvA tetramers; dsDNA enters through RuvA and exits via RuvB. An RuvB hexamer assembles on each DNA strand where it exits the tetramer. Each RuvB hexamer is contacted by two RuvA subunits (via domain III) on 2 adjacent RuvB subunits; this complex drives branch migration. In the full resolvosome a probable DNA-RuvA(4)-RuvB(12)-RuvC(2) complex forms which resolves the HJ.

It localises to the cytoplasm. In terms of biological role, the RuvA-RuvB-RuvC complex processes Holliday junction (HJ) DNA during genetic recombination and DNA repair, while the RuvA-RuvB complex plays an important role in the rescue of blocked DNA replication forks via replication fork reversal (RFR). RuvA specifically binds to HJ cruciform DNA, conferring on it an open structure. The RuvB hexamer acts as an ATP-dependent pump, pulling dsDNA into and through the RuvAB complex. HJ branch migration allows RuvC to scan DNA until it finds its consensus sequence, where it cleaves and resolves the cruciform DNA. In Fervidobacterium nodosum (strain ATCC 35602 / DSM 5306 / Rt17-B1), this protein is Holliday junction branch migration complex subunit RuvA.